The chain runs to 344 residues: Protein RecA (344 aa).

Residue 65-72 (GPESSGKT) coordinates ATP. Residues 323–337 (ELREKFQPAEAPREA) show a composition bias toward basic and acidic residues. The interval 323 to 344 (ELREKFQPAEAPREAGDDEDKE) is disordered.

This sequence belongs to the RecA family.

The protein localises to the cytoplasm. Functionally, can catalyze the hydrolysis of ATP in the presence of single-stranded DNA, the ATP-dependent uptake of single-stranded DNA by duplex DNA, and the ATP-dependent hybridization of homologous single-stranded DNAs. It interacts with LexA causing its activation and leading to its autocatalytic cleavage. This Xanthomonas euvesicatoria pv. vesicatoria (strain 85-10) (Xanthomonas campestris pv. vesicatoria) protein is Protein RecA.